The sequence spans 278 residues: Protein D7 (278 aa).

CHHC U11-48K-type zinc fingers lie at residues leucine 6–asparagine 33 and leucine 40–valine 67. The Zn(2+) site is built by cysteine 9, histidine 15, histidine 25, cysteine 29, cysteine 43, histidine 49, histidine 59, and cysteine 63. Residues glutamine 149–glutamate 164 show a composition bias toward polar residues. 2 disordered regions span residues glutamine 149–asparagine 230 and proline 249–lysine 278. The span at arginine 165–proline 175 shows a compositional bias: basic and acidic residues. Residues alanine 188 to glycine 200 show a composition bias toward polar residues. Basic and acidic residues predominate over residues serine 214–proline 225.

The protein belongs to the UPF0224 (FAM112) family.

Its subcellular location is the cytoplasm. In terms of biological role, involved in oocyte maturation. It is possible that D7 is required at a certain point in the maturation process and that maturation cannot proceed beyond this point unless a threshold amount of D7 protein is provided. In Xenopus laevis (African clawed frog), this protein is Protein D7 (d7).